We begin with the raw amino-acid sequence, 710 residues long: DNA topoisomerase 1 (710 aa).

Residues 1–22 (MPTSTKSKTKTTTKKKTTRKRV) are disordered. The span at 7–22 (SKTKTTTKKKTTRKRV) shows a compositional bias: basic residues. Residues 26–136 (KNLVIVESPA…EKNRVVFNEI (111 aa)) enclose the Toprim domain. Positions 32 and 105 each coordinate Mg(2+). Residues 152-574 (DVDLVDAQQA…QFYKPFAKEL (423 aa)) form the Topo IA-type catalytic domain. The segment at 186–191 (SAGRVQ) is interaction with DNA. Tyrosine 321 serves as the catalytic O-(5'-phospho-DNA)-tyrosine intermediate. 2 consecutive C4-type zinc fingers follow at residues 595-621 (CDVC…FPDC) and 635-663 (CPLC…YPDC). The C4-type 3; atypical zinc finger occupies 676–702 (CPKSGHFLVEKKVRGGGKQVVCSNDEC).

It belongs to the type IA topoisomerase family. In terms of assembly, monomer. Mg(2+) serves as cofactor.

The enzyme catalyses ATP-independent breakage of single-stranded DNA, followed by passage and rejoining.. Functionally, releases the supercoiling and torsional tension of DNA, which is introduced during the DNA replication and transcription, by transiently cleaving and rejoining one strand of the DNA duplex. Introduces a single-strand break via transesterification at a target site in duplex DNA. The scissile phosphodiester is attacked by the catalytic tyrosine of the enzyme, resulting in the formation of a DNA-(5'-phosphotyrosyl)-enzyme intermediate and the expulsion of a 3'-OH DNA strand. The free DNA strand then undergoes passage around the unbroken strand, thus removing DNA supercoils. Finally, in the religation step, the DNA 3'-OH attacks the covalent intermediate to expel the active-site tyrosine and restore the DNA phosphodiester backbone. This Lactococcus lactis subsp. lactis (strain IL1403) (Streptococcus lactis) protein is DNA topoisomerase 1.